The following is a 904-amino-acid chain: Eukaryotic translation initiation factor 3 subunit C (904 aa).

Disordered regions lie at residues 1 to 38 (MSRF…EEED) and 156 to 290 (FRES…TSEK). Polar residues predominate over residues 22-32 (IQRQTAPQFTF). The span at 161 to 183 (DAADDEDEEEEKKEEEESDDEEA) shows a compositional bias: acidic residues. A compositionally biased stretch (basic and acidic residues) spans 194 to 206 (FKKDTVEKVKVEK). A compositionally biased stretch (acidic residues) spans 207 to 232 (DDDDSDDSIDWGQDSDSDESSSEEEA). Residues 237-247 (IRERFLKRPEK) show a composition bias toward basic and acidic residues. Over residues 257–272 (KEKKKTKETKDSRKKK) the composition is skewed to basic residues. The PCI domain occupies 636–812 (FHMHINLELL…ETVVLHRSEP (177 aa)). The interval 847-904 (RGGNQGYNRDRQNYRNQNQNRENWNNNRRQDRGNRNRNQNRDREQREQHRVEFEEKAE) is disordered. Residues 860–873 (YRNQNQNRENWNNN) are compositionally biased toward low complexity. Residues 874–904 (RRQDRGNRNRNQNRDREQREQHRVEFEEKAE) show a composition bias toward basic and acidic residues.

The protein belongs to the eIF-3 subunit C family. In terms of assembly, component of the eukaryotic translation initiation factor 3 (eIF-3) complex.

The protein resides in the cytoplasm. Functionally, component of the eukaryotic translation initiation factor 3 (eIF-3) complex, which is involved in protein synthesis of a specialized repertoire of mRNAs and, together with other initiation factors, stimulates binding of mRNA and methionyl-tRNAi to the 40S ribosome. The eIF-3 complex specifically targets and initiates translation of a subset of mRNAs involved in cell proliferation. This chain is Eukaryotic translation initiation factor 3 subunit C, found in Culex quinquefasciatus (Southern house mosquito).